The primary structure comprises 262 residues: MAIHLVIIDALNLIRRVHSAQPNQDDIQAVITTTTRTINKILKETEPTHIIAVFDHHLQDRGWRAEILPQYKEDRKPMPEALQKGMDDIQEAWWKLGIDSLLSDGDEADDLVATLANKVAVHNEQVTIISTDKGYCQLLSPTLRIRDYFQHRWLDAPFVEKEFGLKPEQLADYWGLAGISSSKITGIPGVGPKAALEILTQFPTIEAANESEDLPKKYRKKFDEHYETAILCRQVAGLRTDIELGFNLQDIRYEKGTRDYQV.

Aspartate 109 lines the Mg(2+) pocket. Residues 165–255 (LKPEQLADYW…FNLQDIRYEK (91 aa)) form the 5'-3' exonuclease domain. Residues leucine 176, alanine 177, isoleucine 187, and valine 190 each coordinate K(+). Residues 189–194 (GVGPKA) form an interaction with DNA region.

It belongs to the Xni family. Mg(2+) is required as a cofactor. K(+) serves as cofactor.

Functionally, has flap endonuclease activity. During DNA replication, flap endonucleases cleave the 5'-overhanging flap structure that is generated by displacement synthesis when DNA polymerase encounters the 5'-end of a downstream Okazaki fragment. The protein is Flap endonuclease Xni of Aliivibrio fischeri (strain MJ11) (Vibrio fischeri).